The sequence spans 333 residues: Glycerol-3-phosphate dehydrogenase [NAD(P)+] (333 aa).

Residues Phe19, Arg40, Arg41, and Lys113 each contribute to the NADPH site. Residues Lys113 and Gly141 each contribute to the sn-glycerol 3-phosphate site. Position 145 (Ala145) interacts with NADPH. Positions 196, 249, 259, 260, and 261 each coordinate sn-glycerol 3-phosphate. Lys196 functions as the Proton acceptor in the catalytic mechanism. Position 260 (Arg260) interacts with NADPH. Val282 and Glu283 together coordinate NADPH.

Belongs to the NAD-dependent glycerol-3-phosphate dehydrogenase family.

The protein resides in the cytoplasm. The enzyme catalyses sn-glycerol 3-phosphate + NAD(+) = dihydroxyacetone phosphate + NADH + H(+). The catalysed reaction is sn-glycerol 3-phosphate + NADP(+) = dihydroxyacetone phosphate + NADPH + H(+). It functions in the pathway membrane lipid metabolism; glycerophospholipid metabolism. In terms of biological role, catalyzes the reduction of the glycolytic intermediate dihydroxyacetone phosphate (DHAP) to sn-glycerol 3-phosphate (G3P), the key precursor for phospholipid synthesis. The polypeptide is Glycerol-3-phosphate dehydrogenase [NAD(P)+] (Sinorhizobium fredii (strain NBRC 101917 / NGR234)).